The following is a 178-amino-acid chain: Peptidyl-prolyl cis-trans isomerase H (178 aa).

The 164-residue stretch at 14–177 (FFDISIGDVP…LPVKITECGQ (164 aa)) folds into the PPIase cyclophilin-type domain.

The protein belongs to the cyclophilin-type PPIase family. PPIase H subfamily.

The protein localises to the nucleus. The enzyme catalyses [protein]-peptidylproline (omega=180) = [protein]-peptidylproline (omega=0). Its function is as follows. PPIases accelerate the folding of proteins. It catalyzes the cis-trans isomerization of proline imidic peptide bonds in oligopeptides. The protein is Peptidyl-prolyl cis-trans isomerase H (cyp7) of Rhizopus delemar (strain RA 99-880 / ATCC MYA-4621 / FGSC 9543 / NRRL 43880) (Mucormycosis agent).